The chain runs to 107 residues: Quaternary ammonium compound-resistance protein QacC (107 aa).

The next 3 helical transmembrane spans lie at 26-46 (FSKF…FYFL), 57-77 (ITYA…SIII), and 84-104 (LITI…NIFG).

Belongs to the drug/metabolite transporter (DMT) superfamily. Small multidrug resistance (SMR) (TC 2.A.7.1) family.

The protein resides in the cell membrane. Its function is as follows. Multidrug exporter. Is implicated for the resistance to bacteriocidal quaternary ammonium compounds. The protein is Quaternary ammonium compound-resistance protein QacC of Staphylococcus sp. (strain ST827).